Consider the following 126-residue polypeptide: Fatty acid-binding protein, liver (126 aa).

Position 2 is an N-acetylalanine (A2). Residues K77, H99, and Q101 each contribute to the cholate site.

It belongs to the calycin superfamily. Fatty-acid binding protein (FABP) family.

It localises to the cytoplasm. Binds free fatty acids and their coenzyme A derivatives, bilirubin, and some other small molecules in the cytoplasm. May be involved in intracellular lipid transport. The chain is Fatty acid-binding protein, liver (fabp1) from Aquarana catesbeiana (American bullfrog).